Reading from the N-terminus, the 795-residue chain is Phenylalanine--tRNA ligase beta subunit (795 aa).

One can recognise a tRNA-binding domain in the interval 39 to 148 (AGSFHGVVVG…ADAPIGTDIR (110 aa)). One can recognise a B5 domain in the interval 401 to 476 (PKRATITLRR…RVYGYNNIPD (76 aa)). The Mg(2+) site is built by aspartate 454, aspartate 460, glutamate 463, and glutamate 464. Residues 701-794 (SRFPANRRDI…LKERFQASLR (94 aa)) form the FDX-ACB domain.

This sequence belongs to the phenylalanyl-tRNA synthetase beta subunit family. Type 1 subfamily. In terms of assembly, tetramer of two alpha and two beta subunits. Mg(2+) serves as cofactor.

It localises to the cytoplasm. The enzyme catalyses tRNA(Phe) + L-phenylalanine + ATP = L-phenylalanyl-tRNA(Phe) + AMP + diphosphate + H(+). The sequence is that of Phenylalanine--tRNA ligase beta subunit from Shigella boydii serotype 4 (strain Sb227).